Here is a 282-residue protein sequence, read N- to C-terminus: Pantothenate synthetase (282 aa).

30 to 37 contributes to the ATP binding site; that stretch reads MGYLHEGH. The active-site Proton donor is H37. Residue Q61 participates in (R)-pantoate binding. Q61 contributes to the beta-alanine binding site. ATP is bound at residue 148–151; sequence GQKD. Q154 is a binding site for (R)-pantoate. Residues V177 and 185 to 188 each bind ATP; that span reads MSSR.

It belongs to the pantothenate synthetase family. As to quaternary structure, homodimer.

The protein resides in the cytoplasm. The catalysed reaction is (R)-pantoate + beta-alanine + ATP = (R)-pantothenate + AMP + diphosphate + H(+). Its pathway is cofactor biosynthesis; (R)-pantothenate biosynthesis; (R)-pantothenate from (R)-pantoate and beta-alanine: step 1/1. Functionally, catalyzes the condensation of pantoate with beta-alanine in an ATP-dependent reaction via a pantoyl-adenylate intermediate. This chain is Pantothenate synthetase, found in Syntrophomonas wolfei subsp. wolfei (strain DSM 2245B / Goettingen).